We begin with the raw amino-acid sequence, 234 residues long: Small ribosomal subunit protein uS2 (234 aa).

It belongs to the universal ribosomal protein uS2 family.

The sequence is that of Small ribosomal subunit protein uS2 from Prochlorococcus marinus subsp. pastoris (strain CCMP1986 / NIES-2087 / MED4).